The primary structure comprises 217 residues: Deoxyribose-phosphate aldolase (217 aa).

Asp-90 functions as the Proton donor/acceptor in the catalytic mechanism. Lys-152 acts as the Schiff-base intermediate with acetaldehyde in catalysis. Lys-181 functions as the Proton donor/acceptor in the catalytic mechanism.

Belongs to the DeoC/FbaB aldolase family. DeoC type 1 subfamily.

Its subcellular location is the cytoplasm. It carries out the reaction 2-deoxy-D-ribose 5-phosphate = D-glyceraldehyde 3-phosphate + acetaldehyde. It participates in carbohydrate degradation; 2-deoxy-D-ribose 1-phosphate degradation; D-glyceraldehyde 3-phosphate and acetaldehyde from 2-deoxy-alpha-D-ribose 1-phosphate: step 2/2. Its function is as follows. Catalyzes a reversible aldol reaction between acetaldehyde and D-glyceraldehyde 3-phosphate to generate 2-deoxy-D-ribose 5-phosphate. This chain is Deoxyribose-phosphate aldolase, found in Metamycoplasma hominis (Mycoplasma hominis).